The primary structure comprises 238 residues: 1-(5-phosphoribosyl)-5-[(5-phosphoribosylamino)methylideneamino] imidazole-4-carboxamide isomerase (238 aa).

Aspartate 8 functions as the Proton acceptor in the catalytic mechanism. The Proton donor role is filled by aspartate 127.

The protein belongs to the HisA/HisF family.

The protein resides in the cytoplasm. It carries out the reaction 1-(5-phospho-beta-D-ribosyl)-5-[(5-phospho-beta-D-ribosylamino)methylideneamino]imidazole-4-carboxamide = 5-[(5-phospho-1-deoxy-D-ribulos-1-ylimino)methylamino]-1-(5-phospho-beta-D-ribosyl)imidazole-4-carboxamide. It functions in the pathway amino-acid biosynthesis; L-histidine biosynthesis; L-histidine from 5-phospho-alpha-D-ribose 1-diphosphate: step 4/9. The sequence is that of 1-(5-phosphoribosyl)-5-[(5-phosphoribosylamino)methylideneamino] imidazole-4-carboxamide isomerase from Nitratiruptor sp. (strain SB155-2).